We begin with the raw amino-acid sequence, 338 residues long: MASISYDGLLRGAAKDIQTLTEASLVHGYFNLELDCPEGKQLREDVLFLESFTKEIFDTPSPQKTIYDFKKLGRFRTTGFKPLGIEEGAKGKSDGFEMFMLPQNELLLPSHQDKLQSPSAVFSHRATLTRCMSNYDAASQLILRRITESLNLDNALLAAHNPSEPSVTNLGFLRYPPQPATSENCGHIAHTDVGTLTILAATQRGLQVINSETQDWTFVDPHPQNEFLLVQFGDCLKFLSGGRVVPSIHRVIPSDNPEEREGTKYTLAYFVRPNEEAVIKDDRGEEWVYGDYHCRKFGAFARPLKEGDRDRMPDRPVGEYDMINIRKFKGLADGVSAA.

The region spanning 165-273 (PSVTNLGFLR…KYTLAYFVRP (109 aa)) is the Fe2OG dioxygenase domain. Positions 190, 192, and 249 each coordinate Fe cation. 2-oxoglutarate is bound at residue Lys-264.

The protein belongs to the iron/ascorbate-dependent oxidoreductase family. Fe(2+) serves as cofactor.

Its pathway is antifungal biosynthesis. Functionally, 2-oxoglutarate-dependent dioxygenase; part of the gene cluster that mediates the biosynthesis of echinocandin B, a fungal lipidated cyclic hexapeptide that acts as an antifungal agent. Linoleoyl-AMP, produced by the fatty-acyl-AMP ligase ecdI, is transferred to the initiation carrier domain (T0) of ecdA. The linoleoyl-S-phosphopantetheinyl-T0 is sequentially extended with L-ornithine, L-threonine, L-proline, L-homotyrosine, L-threonine, and 4R-methyl-L-proline to form the linear hexapeptide. Thereafter, the terminal condensation (C7) performs macrocyclization of the NRPS product and the cyclic scaffold is released from ecdA. All six of the amino acid residues are hydroxylated, including 4R,5R-dihydroxy-L-ornithine, 4R-hydroxyl-L-proline, 3S,4S-dihydroxy-L-homotyrosine, and 3S-hydroxyl-4S-methyl-L-prolin. In the pathway, all the hydroxylation reactions are proposed to occur following completion of the cyclic peptide, so the unhydroxylated precursor produced by ecdA will undergo six rounds of hydroxylation. Five hydroxylase genes (ecdG, ecdH, ecdK, htyE and htyF) are embedded within the echinocandin B (ecd) and L-homotyrosine (hty) clusters. This chain is 2-oxoglutarate-dependent dioxygenase ecdG, found in Aspergillus rugulosus (Emericella rugulosa).